The primary structure comprises 446 residues: Adenylosuccinate synthetase (446 aa).

GTP-binding positions include 20-26 (GDEGKGK) and 48-50 (GHT). Asp-21 acts as the Proton acceptor in catalysis. Residues Asp-21 and Gly-48 each coordinate Mg(2+). IMP is bound by residues 21–24 (DEGK), 46–49 (NAGH), Thr-137, Arg-151, Gln-232, Thr-247, and Arg-319. His-49 serves as the catalytic Proton donor. 315–321 (SVTGRPR) provides a ligand contact to substrate. GTP contacts are provided by residues Arg-321, 347–349 (KLD), and 429–431 (STG).

Belongs to the adenylosuccinate synthetase family. In terms of assembly, homodimer. Mg(2+) serves as cofactor.

It localises to the cytoplasm. The enzyme catalyses IMP + L-aspartate + GTP = N(6)-(1,2-dicarboxyethyl)-AMP + GDP + phosphate + 2 H(+). It participates in purine metabolism; AMP biosynthesis via de novo pathway; AMP from IMP: step 1/2. In terms of biological role, plays an important role in the de novo pathway of purine nucleotide biosynthesis. Catalyzes the first committed step in the biosynthesis of AMP from IMP. The protein is Adenylosuccinate synthetase of Ralstonia nicotianae (strain ATCC BAA-1114 / GMI1000) (Ralstonia solanacearum).